We begin with the raw amino-acid sequence, 359 residues long: Cytosolic sulfotransferase 15 (359 aa).

Residue 101–106 participates in 3'-phosphoadenylyl sulfate binding; sequence KSGTTW. Histidine 168 (proton acceptor) is an active-site residue. 3'-phosphoadenylyl sulfate-binding positions include arginine 190, serine 198, tyrosine 256, and 322–324; that span reads RKG.

This sequence belongs to the sulfotransferase 1 family. In terms of tissue distribution, expressed in leaves.

The protein resides in the cytoplasm. It catalyses the reaction a 12-hydroxyjasmonate + 3'-phosphoadenylyl sulfate = a 12-sulfojasmonate + adenosine 3',5'-bisphosphate + H(+). Its function is as follows. Sulfotransferase that utilizes 3'-phospho-5'-adenylyl sulfate (PAPS) as sulfonate donor to specifically catalyze the sulfate conjugation of hydroxyjasmonates, with a preference for 12-hydroxyjasmonate over 11-hydroxyjasmonate. No activity with 12-hydroxyjasmonic acid methyl ester, cucurbic acid, 7-iso-cucurbic acid, 6-epi-cucurbic acid, 6-epi-7-iso-cucurbic acid and their methyl esters, prostaglandin E2, arachidonyl alcohol and 11-eicosenol. In Arabidopsis thaliana (Mouse-ear cress), this protein is Cytosolic sulfotransferase 15 (SOT15).